We begin with the raw amino-acid sequence, 248 residues long: 2,3-bisphosphoglycerate-dependent phosphoglycerate mutase (248 aa).

Residues 8–15 (RHGESGWN) and arginine 58 contribute to the substrate site. Residue histidine 9 is the Tele-phosphohistidine intermediate of the active site. The disordered stretch occupies residues 82-101 (GTGEDRTEREDGSRKDRKEK). Glutamate 124 (proton donor/acceptor) is an active-site residue. Residues 124–127 (ERYY) and lysine 135 each bind substrate.

This sequence belongs to the phosphoglycerate mutase family. BPG-dependent PGAM subfamily.

The enzyme catalyses (2R)-2-phosphoglycerate = (2R)-3-phosphoglycerate. It participates in carbohydrate degradation; glycolysis; pyruvate from D-glyceraldehyde 3-phosphate: step 3/5. Its function is as follows. Catalyzes the interconversion of 2-phosphoglycerate and 3-phosphoglycerate. The chain is 2,3-bisphosphoglycerate-dependent phosphoglycerate mutase from Methanosarcina acetivorans (strain ATCC 35395 / DSM 2834 / JCM 12185 / C2A).